The sequence spans 151 residues: Protein Smg homolog (151 aa).

The protein belongs to the Smg family.

The protein is Protein Smg homolog of Laribacter hongkongensis (strain HLHK9).